Here is an 820-residue protein sequence, read N- to C-terminus: Leucine--tRNA ligase (820 aa).

Positions 40–51 match the 'HIGH' region motif; it reads PYPSGAGLHVGH. A 'KMSKS' region motif is present at residues 601–605; that stretch reads KMSKS. Residue Lys604 participates in ATP binding.

Belongs to the class-I aminoacyl-tRNA synthetase family.

It is found in the cytoplasm. It catalyses the reaction tRNA(Leu) + L-leucine + ATP = L-leucyl-tRNA(Leu) + AMP + diphosphate. In Chlamydia felis (strain Fe/C-56) (Chlamydophila felis), this protein is Leucine--tRNA ligase.